A 245-amino-acid chain; its full sequence is Cuticle protein (245 aa).

In terms of domain architecture, Chitin-binding type R&amp;R spans 25-86; the sequence is VSYAAAPALV…TGDSKSQQES (62 aa). The segment at 79–100 is disordered; the sequence is DSKSQQESRSGDVVQGSYSVVD. Repeat copies occupy residues 92–95, 108–111, and 118–121.

Component of the cuticle of African malaria mosquito. This Anopheles gambiae (African malaria mosquito) protein is Cuticle protein (Ccp84Ab).